A 452-amino-acid polypeptide reads, in one-letter code: UDP-N-acetylmuramate--L-alanine ligase (452 aa).

110–116 contacts ATP; that stretch reads GTHGKTT.

The protein belongs to the MurCDEF family.

Its subcellular location is the cytoplasm. It carries out the reaction UDP-N-acetyl-alpha-D-muramate + L-alanine + ATP = UDP-N-acetyl-alpha-D-muramoyl-L-alanine + ADP + phosphate + H(+). It functions in the pathway cell wall biogenesis; peptidoglycan biosynthesis. Its function is as follows. Cell wall formation. The protein is UDP-N-acetylmuramate--L-alanine ligase of Francisella philomiragia subsp. philomiragia (strain ATCC 25017 / CCUG 19701 / FSC 153 / O#319-036).